Reading from the N-terminus, the 517-residue chain is Crotonobetaine/carnitine--CoA ligase (517 aa).

Belongs to the ATP-dependent AMP-binding enzyme family.

The enzyme catalyses 4-(trimethylamino)butanoate + ATP + CoA = 4-(trimethylamino)butanoyl-CoA + AMP + diphosphate. It carries out the reaction crotonobetaine + ATP + CoA = crotonobetainyl-CoA + AMP + diphosphate. It catalyses the reaction (R)-carnitine + ATP + CoA = (R)-carnitinyl-CoA + AMP + diphosphate. Its pathway is amine and polyamine metabolism; carnitine metabolism. Its function is as follows. Catalyzes the transfer of CoA to carnitine, generating the initial carnitinyl-CoA needed for the CaiB reaction cycle. Also has activity toward crotonobetaine and gamma-butyrobetaine. In Shigella dysenteriae serotype 1 (strain Sd197), this protein is Crotonobetaine/carnitine--CoA ligase.